The sequence spans 469 residues: ATP synthase subunit beta (469 aa).

An ATP-binding site is contributed by 156–163 (GGAGVGKT).

The protein belongs to the ATPase alpha/beta chains family. As to quaternary structure, F-type ATPases have 2 components, CF(1) - the catalytic core - and CF(0) - the membrane proton channel. CF(1) has five subunits: alpha(3), beta(3), gamma(1), delta(1), epsilon(1). CF(0) has three main subunits: a(1), b(2) and c(9-12). The alpha and beta chains form an alternating ring which encloses part of the gamma chain. CF(1) is attached to CF(0) by a central stalk formed by the gamma and epsilon chains, while a peripheral stalk is formed by the delta and b chains.

The protein resides in the cell membrane. It catalyses the reaction ATP + H2O + 4 H(+)(in) = ADP + phosphate + 5 H(+)(out). In terms of biological role, produces ATP from ADP in the presence of a proton gradient across the membrane. The catalytic sites are hosted primarily by the beta subunits. The sequence is that of ATP synthase subunit beta from Lactococcus lactis subsp. cremoris (strain MG1363).